Reading from the N-terminus, the 116-residue chain is Large ribosomal subunit protein uL23 (116 aa).

This sequence belongs to the universal ribosomal protein uL23 family. As to quaternary structure, part of the 50S ribosomal subunit. Contacts protein L29, and trigger factor when it is bound to the ribosome.

One of the early assembly proteins it binds 23S rRNA. One of the proteins that surrounds the polypeptide exit tunnel on the outside of the ribosome. Forms the main docking site for trigger factor binding to the ribosome. This is Large ribosomal subunit protein uL23 from Psychrobacter arcticus (strain DSM 17307 / VKM B-2377 / 273-4).